The chain runs to 332 residues: Glycerol-3-phosphate dehydrogenase [NAD(P)+] (332 aa).

Ser11, Phe12, Lys32, and Lys106 together coordinate NADPH. Sn-glycerol 3-phosphate is bound by residues Lys106, Gly137, and Ser139. Ala141 provides a ligand contact to NADPH. Residues Lys192, Asp245, Ser255, Arg256, and Asn257 each contribute to the sn-glycerol 3-phosphate site. Lys192 acts as the Proton acceptor in catalysis. NADPH is bound at residue Arg256. The NADPH site is built by Val280 and Glu282.

Belongs to the NAD-dependent glycerol-3-phosphate dehydrogenase family.

The protein resides in the cytoplasm. The enzyme catalyses sn-glycerol 3-phosphate + NAD(+) = dihydroxyacetone phosphate + NADH + H(+). It catalyses the reaction sn-glycerol 3-phosphate + NADP(+) = dihydroxyacetone phosphate + NADPH + H(+). It functions in the pathway membrane lipid metabolism; glycerophospholipid metabolism. Its function is as follows. Catalyzes the reduction of the glycolytic intermediate dihydroxyacetone phosphate (DHAP) to sn-glycerol 3-phosphate (G3P), the key precursor for phospholipid synthesis. The chain is Glycerol-3-phosphate dehydrogenase [NAD(P)+] from Staphylococcus haemolyticus (strain JCSC1435).